Consider the following 460-residue polypeptide: ATP synthase subunit beta (460 aa).

Residue 150 to 157 coordinates ATP; sequence GGAGVGKT.

It belongs to the ATPase alpha/beta chains family. F-type ATPases have 2 components, CF(1) - the catalytic core - and CF(0) - the membrane proton channel. CF(1) has five subunits: alpha(3), beta(3), gamma(1), delta(1), epsilon(1). CF(0) has three main subunits: a(1), b(2) and c(9-12). The alpha and beta chains form an alternating ring which encloses part of the gamma chain. CF(1) is attached to CF(0) by a central stalk formed by the gamma and epsilon chains, while a peripheral stalk is formed by the delta and b chains.

Its subcellular location is the cell inner membrane. The enzyme catalyses ATP + H2O + 4 H(+)(in) = ADP + phosphate + 5 H(+)(out). In terms of biological role, produces ATP from ADP in the presence of a proton gradient across the membrane. The catalytic sites are hosted primarily by the beta subunits. The sequence is that of ATP synthase subunit beta from Citrobacter koseri (strain ATCC BAA-895 / CDC 4225-83 / SGSC4696).